The following is a 517-amino-acid chain: Crotonobetaine/carnitine--CoA ligase (517 aa).

The protein belongs to the ATP-dependent AMP-binding enzyme family.

It carries out the reaction 4-(trimethylamino)butanoate + ATP + CoA = 4-(trimethylamino)butanoyl-CoA + AMP + diphosphate. It catalyses the reaction crotonobetaine + ATP + CoA = crotonobetainyl-CoA + AMP + diphosphate. The catalysed reaction is (R)-carnitine + ATP + CoA = (R)-carnitinyl-CoA + AMP + diphosphate. It participates in amine and polyamine metabolism; carnitine metabolism. Its function is as follows. Catalyzes the transfer of CoA to carnitine, generating the initial carnitinyl-CoA needed for the CaiB reaction cycle. Also has activity toward crotonobetaine and gamma-butyrobetaine. The protein is Crotonobetaine/carnitine--CoA ligase of Shigella sonnei (strain Ss046).